A 250-amino-acid chain; its full sequence is Oxidation resistance protein 1 (250 aa).

A TLDc domain is found at 61 to 250 (RLLSKEMCEE…IVGVEVWRVG (190 aa)).

Belongs to the OXR1 family.

The protein resides in the mitochondrion. Its function is as follows. May be involved in protection from oxidative damage. The polypeptide is Oxidation resistance protein 1 (OXR1) (Kluyveromyces lactis (strain ATCC 8585 / CBS 2359 / DSM 70799 / NBRC 1267 / NRRL Y-1140 / WM37) (Yeast)).